The sequence spans 480 residues: tRNA-2-methylthio-N(6)-dimethylallyladenosine synthase (480 aa).

The MTTase N-terminal domain maps to 29–145; that stretch reads GSFWIQTFGC…LEALLTQVDN (117 aa). [4Fe-4S] cluster-binding residues include Cys-38, Cys-74, Cys-108, Cys-180, Cys-184, and Cys-187. The 238-residue stretch at 166 to 403 folds into the Radical SAM core domain; the sequence is RDSTICAWVN…NALVERIALQ (238 aa). The TRAM domain occupies 406-474; that stretch reads SRYSGKVEQV…AFSLSGTPCE (69 aa).

It belongs to the methylthiotransferase family. MiaB subfamily. In terms of assembly, monomer. The cofactor is [4Fe-4S] cluster.

It is found in the cytoplasm. The enzyme catalyses N(6)-dimethylallyladenosine(37) in tRNA + (sulfur carrier)-SH + AH2 + 2 S-adenosyl-L-methionine = 2-methylsulfanyl-N(6)-dimethylallyladenosine(37) in tRNA + (sulfur carrier)-H + 5'-deoxyadenosine + L-methionine + A + S-adenosyl-L-homocysteine + 2 H(+). Catalyzes the methylthiolation of N6-(dimethylallyl)adenosine (i(6)A), leading to the formation of 2-methylthio-N6-(dimethylallyl)adenosine (ms(2)i(6)A) at position 37 in tRNAs that read codons beginning with uridine. This is tRNA-2-methylthio-N(6)-dimethylallyladenosine synthase from Prochlorococcus marinus (strain MIT 9313).